Reading from the N-terminus, the 424-residue chain is Zona pellucida sperm-binding protein 3 (424 aa).

The signal sequence occupies residues 1-22 (MELSYRLFICLLLWGSTELCYP). A Pyrrolidone carboxylic acid modification is found at Gln23. Residues 23–387 (QPFWLLQGGA…QWALPADTSV (365 aa)) are Extracellular-facing. The region spanning 45–307 (ECREATLLVT…KACSFSKSSN (263 aa)) is the ZP domain. Cystine bridges form between Cys46-Cys140 and Cys78-Cys99. Asn125 and Asn147 each carry an N-linked (GlcNAc...) asparagine glycan. Thr156, Thr162, and Thr163 each carry an O-linked (GalNAc...) threonine glycan. Disulfide bonds link Cys217-Cys282 and Cys239-Cys300. Asn272 is a glycosylation site (N-linked (GlcNAc...) asparagine). A propeptide spans 351–424 (RRHVTEEADI…TASRPVSASE (74 aa)) (removed in mature form). The helical transmembrane segment at 388-408 (LLLGIGLAVVASLTLTAVILI) threads the bilayer. The Cytoplasmic segment spans residues 409–424 (FTRRWRTASRPVSASE).

The protein belongs to the ZP domain family. ZPC subfamily. In terms of assembly, polymers of ZP2 and ZP3 organized into long filaments cross-linked by ZP1 homodimers. Interacts with ZP1 and ZP2. In terms of processing, proteolytically cleaved before the transmembrane segment to yield the secreted ectodomain incorporated in the zona pellucida. N-glycosylated. Post-translationally, O-glycosylated; removal of O-linked glycans may play an important role in the post-fertilization block to polyspermy. In terms of tissue distribution, expressed in oocytes.

It localises to the zona pellucida. Its subcellular location is the cell membrane. Functionally, component of the zona pellucida, an extracellular matrix surrounding oocytes which mediates sperm binding, induction of the acrosome reaction and prevents post-fertilization polyspermy. The zona pellucida is composed of 3 to 4 glycoproteins, ZP1, ZP2, ZP3, and ZP4. ZP3 is essential for sperm binding and zona matrix formation. The chain is Zona pellucida sperm-binding protein 3 (ZP3) from Macaca radiata (Bonnet macaque).